Here is a 403-residue protein sequence, read N- to C-terminus: Betaine--homocysteine S-methyltransferase 1 (403 aa).

In terms of domain architecture, Hcy-binding spans 8-311 (KGLLERLDAG…YHTRAIAEEL (304 aa)). Residues Cys-214, Cys-296, and Cys-297 each contribute to the Zn(2+) site.

As to quaternary structure, homotetramer. Requires Zn(2+) as cofactor.

The protein localises to the cytoplasm. The catalysed reaction is L-homocysteine + glycine betaine = N,N-dimethylglycine + L-methionine. Its pathway is amine and polyamine degradation; betaine degradation; sarcosine from betaine: step 1/2. It functions in the pathway amino-acid biosynthesis; L-methionine biosynthesis via de novo pathway; L-methionine from L-homocysteine (BhmT route): step 1/1. Involved in the regulation of homocysteine metabolism. Converts betaine and homocysteine to dimethylglycine and methionine, respectively. This reaction is also required for the irreversible oxidation of choline. This chain is Betaine--homocysteine S-methyltransferase 1 (bhmt), found in Xenopus tropicalis (Western clawed frog).